The chain runs to 456 residues: Glycosyl hydrolase family 109 protein (456 aa).

The tat-type signal signal peptide spans 1 to 31; it reads MKLNRRHFLKTAGLSAAGILTSQLPLSSAEA. NAD(+) contacts are provided by residues 62–63, D84, 133–136, 153–154, and N182; these read QR, WEWH, and EV. Substrate-binding positions include Y211, R230, 242–245, and Y324; that span reads YPTH. Y242 serves as a coordination point for NAD(+).

This sequence belongs to the Gfo/Idh/MocA family. Glycosyl hydrolase 109 subfamily. Requires NAD(+) as cofactor. Post-translationally, predicted to be exported by the Tat system. The position of the signal peptide cleavage has not been experimentally proven.

Functionally, glycosidase. The protein is Glycosyl hydrolase family 109 protein of Shewanella pealeana (strain ATCC 700345 / ANG-SQ1).